Here is a 596-residue protein sequence, read N- to C-terminus: Germinal center kinase 3 (596 aa).

Residues 1-54 show a composition bias toward low complexity; it reads MSSSNLAGNTNTTTTSSAASAAAAHSAANASTITSEYSTTQTTTGTFNTDTLSS. Residues 1-80 are disordered; it reads MSSSNLAGNT…PPPPPQVSSP (80 aa). Phosphothreonine; by autocatalysis is present on residues Thr13 and Thr32. Residues 67–77 are compositionally biased toward pro residues; sequence SQPPPPPPPQV. Residues 108-386 enclose the Protein kinase domain; it reads YKLDESIGVG…ASELLKYSFF (279 aa). Residues 114–122 and Lys137 each bind ATP; that span reads IGVGATATV. Residue Ser190 is modified to Phosphoserine; by autocatalysis. The Proton acceptor role is filled by Asp240. Position 280 is a phosphothreonine (Thr280). Position 405 is a phosphoserine; by autocatalysis (Ser405). Phosphoserine is present on Ser419. The tract at residues 429 to 496 is disordered; that stretch reads NWEFEYDSPQ…EGGGATTPCP (68 aa). The span at 432–450 shows a compositional bias: acidic residues; it reads FEYDSPQESDDDSDLEDEE. The span at 466-479 shows a compositional bias: gly residues; sequence GAAGAAGGATGGAA.

Belongs to the protein kinase superfamily. STE Ser/Thr protein kinase family. STE20 subfamily. As to quaternary structure, interacts (via C-terminus) with clh-3; required for the phosphorylation-mediated inhibition of clh-3 function. Interacts (via C-terminus) with wnk-1; the interaction is direct. Post-translationally, phosphorylated at Thr-280 and Ser-419 probably by wnk-1; phosphorylation results in weak activation. Predominantly autophosphorylated at Thr-32 and Ser-190 and weakly autophosphorylated at Thr-13 and Ser-405 in vitro. In terms of tissue distribution, ubiquitously expressed with a higher expression in the excretory cell. Expressed in both male and female germ cells; up-regulated in maturing spermatocytes but absent in mature sperm.

The protein localises to the cytoplasm. It is found in the nucleus. The enzyme catalyses L-seryl-[protein] + ATP = O-phospho-L-seryl-[protein] + ADP + H(+). It catalyses the reaction L-threonyl-[protein] + ATP = O-phospho-L-threonyl-[protein] + ADP + H(+). Functionally, plays a role in osmotic stress responses by regulating ion homeostasis and by controlling cell volume via the phosphorylation-mediated inhibition of the chloride channel clh-3. In addition, increases gpdh-1 translation upon osmotic stress, likely downstream of wnk-1. Involved in several developmental processes including the tubular formation of the excretory canals, the formation of the intestine and the progression through larval stages. In addition, required for germ line development by controlling meiosis and chromosomal segregation during spermatogenesis. By controlling clh-3 activity, may regulate the development of the excretory canals and fertility. The sequence is that of Germinal center kinase 3 from Caenorhabditis elegans.